A 273-amino-acid chain; its full sequence is Type III pantothenate kinase (273 aa).

5–12 contributes to the ATP binding site; the sequence is DVGNSHVV. Residue 112–115 coordinates substrate; sequence GTDL. Asp114 acts as the Proton acceptor in catalysis. Asp134 provides a ligand contact to K(+). Thr137 provides a ligand contact to ATP. Thr189 provides a ligand contact to substrate.

Belongs to the type III pantothenate kinase family. As to quaternary structure, homodimer. NH4(+) serves as cofactor. The cofactor is K(+).

Its subcellular location is the cytoplasm. It carries out the reaction (R)-pantothenate + ATP = (R)-4'-phosphopantothenate + ADP + H(+). It functions in the pathway cofactor biosynthesis; coenzyme A biosynthesis; CoA from (R)-pantothenate: step 1/5. Its function is as follows. Catalyzes the phosphorylation of pantothenate (Pan), the first step in CoA biosynthesis. This is Type III pantothenate kinase from Treponema pallidum (strain Nichols).